Reading from the N-terminus, the 156-residue chain is CKLF-like MARVEL transmembrane domain-containing protein 5 (156 aa).

An MARVEL domain is found at 29–146 (FLSSLKGILL…DAFKIYRTEL (118 aa)). The next 4 helical transmembrane spans lie at 35–55 (GILL…FTAS), 56–76 (ISAY…FLFL), 93–113 (LDFL…FAAV), and 119–139 (AAIA…YDAF).

It belongs to the chemokine-like factor family.

Its subcellular location is the membrane. The polypeptide is CKLF-like MARVEL transmembrane domain-containing protein 5 (Cmtm5) (Mus musculus (Mouse)).